The sequence spans 88 residues: MANTISAERRIRLTKKETAYNRYWRTTMKTYVKRAKKAIESGDREAAEAAVLKAQSVIDKVAVKGVIHKNEAARRKSRLMKLFNQKFQ.

Belongs to the bacterial ribosomal protein bS20 family.

Binds directly to 16S ribosomal RNA. The polypeptide is Small ribosomal subunit protein bS20 (Coprothermobacter proteolyticus (strain ATCC 35245 / DSM 5265 / OCM 4 / BT)).